The primary structure comprises 430 residues: Ribosomal protein uS12 methylthiotransferase RimO (430 aa).

The MTTase N-terminal domain maps to 1–116 (MRVGIKVLGC…IANAIENGTD (116 aa)). [4Fe-4S] cluster is bound by residues Cys10, Cys46, Cys79, Cys148, Cys152, and Cys155. In terms of domain architecture, Radical SAM core spans 134–365 (LEERPYAYVK…LLQAEISNSR (232 aa)). Residues 367 to 430 (DRFVGKKLKF…DEYDMWGSVI (64 aa)) enclose the TRAM domain.

It belongs to the methylthiotransferase family. RimO subfamily. Monomer. Requires [4Fe-4S] cluster as cofactor.

It localises to the cytoplasm. The catalysed reaction is L-aspartate(89)-[ribosomal protein uS12]-hydrogen + (sulfur carrier)-SH + AH2 + 2 S-adenosyl-L-methionine = 3-methylsulfanyl-L-aspartate(89)-[ribosomal protein uS12]-hydrogen + (sulfur carrier)-H + 5'-deoxyadenosine + L-methionine + A + S-adenosyl-L-homocysteine + 2 H(+). In terms of biological role, catalyzes the methylthiolation of an aspartic acid residue of ribosomal protein uS12. The protein is Ribosomal protein uS12 methylthiotransferase RimO of Thermotoga maritima (strain ATCC 43589 / DSM 3109 / JCM 10099 / NBRC 100826 / MSB8).